A 235-amino-acid polypeptide reads, in one-letter code: TIR domain-containing adapter molecule 2 (235 aa).

The disordered stretch occupies residues 1–39; it reads MGIGKSKINSCPLSLSWGKRHSVDTSPGYHESDSKKSED. Gly2 carries N-myristoyl glycine lipidation. Phosphoserine; by PKC/PRKCE is present on Ser16. Basic and acidic residues predominate over residues 30–39; the sequence is HESDSKKSED. The TIR domain maps to 73–229; sequence AEEEVFLKFV…TIWKETRNMV (157 aa). Position 167 is a phosphotyrosine (Tyr167).

As to quaternary structure, homodimer. Interacts with TLR4, TICAM1, IRF3 and IRF7 in response to LPS. Interacts with IL1R1, IL1RAP, IRAK2, IRAK3 and TRAF6. Interacts with protein kinase-inactive mutants of IRAK1 and IRAK4. Isoform 1 interacts with isoform 2; the interaction occurs in late endosomes and disrupts the interaction between isoform 1 and TICAM1. Interacts with MYD88; the interaction decreases after IL-18 stimulation in a time-dependent manner. Interacts with IL18R1 and IL18RAP. Interacts with TLR2. Interacts with RAB11FIP2. In terms of processing, phosphorylated by PRKCE in response to LPS. Phosphorylation is essential for its function. It is depleted from the membrane upon phosphorylation. Tyrosine phosphorylation is inhibited by phosphatase PTPN4. Isoform 1 is myristoylated. Required for membrane association which is critical for its ability to initiate efficient signaling. As to expression, expressed in spleen, prostate, testis, uterus, small intestine, colon, peripheral blood leukocytes, heart, placenta, lung, liver, skeletal muscle, and pancreas Isoform 2 is ubiquitously expressed (at lower levels than isoform 1).

The protein resides in the cytoplasm. Its subcellular location is the golgi apparatus. The protein localises to the cell membrane. It is found in the endoplasmic reticulum. It localises to the early endosome membrane. The protein resides in the late endosome membrane. Its subcellular location is the cell projection. The protein localises to the phagocytic cup. Functionally, functions as a sorting adapter in different signaling pathways to facilitate downstream signaling leading to type I interferon induction. In TLR4 signaling, physically bridges TLR4 and TICAM1 and functionally transmits signal to TICAM1 in early endosomes after endocytosis of TLR4. In TLR2 signaling, physically bridges TLR2 and MYD88 and is required for the TLR2-dependent movement of MYD88 to endosomes following ligand engagement. Involved in IL-18 signaling and is proposed to function as a sorting adapter for MYD88 in IL-18 signaling during adaptive immune response. Forms a complex with RAB11FIP2 that is recruited to the phagosomes to promote the activation of the actin-regulatory GTPases RAC1 and CDC42 and subsequent phagocytosis of Gram-negative bacteria. Its function is as follows. Proposed to inhibit LPS-TLR4 signaling at the late endosome by interaction with isoform 1 thereby disrupting the association of isoform 1 with TICAM1. May be involved in TLR4 degradation in late endosomes. This is TIR domain-containing adapter molecule 2 (TICAM2) from Homo sapiens (Human).